The primary structure comprises 727 residues: Kinesin-like protein KIN-14G (727 aa).

3 disordered regions span residues 100–156 (QTAP…LHLR), 172–194 (HLSAPSRSPTPPPNAVAPSSCSR), and 336–357 (LAGGARSGRRDNPRRQGTGATR). The segment covering 114-133 (VASSTAGRASRTKSASSTGR) has biased composition (polar residues). The 330-residue stretch at 381 to 710 (NIRVFCRVRP…LRFAARVNSC (330 aa)) folds into the Kinesin motor domain. 461–468 (GQTGSGKT) contacts ATP.

This sequence belongs to the TRAFAC class myosin-kinesin ATPase superfamily. Kinesin family. KIN-14 subfamily.

This Oryza sativa subsp. japonica (Rice) protein is Kinesin-like protein KIN-14G.